The chain runs to 333 residues: 5-formaminoimidazole-4-carboxamide-1-(beta)-D-ribofuranosyl 5'-monophosphate synthetase (333 aa).

Residues histidine 9 and serine 73 each coordinate 5-amino-1-(5-phospho-beta-D-ribosyl)imidazole-4-carboxamide. An ATP-grasp domain is found at 94–324 (RNLFEWEANQ…ISREIKLAIN (231 aa)). ATP is bound by residues 124–184 (PEDI…VPMY) and glutamate 206. Asparagine 230 is a 5-amino-1-(5-phospho-beta-D-ribosyl)imidazole-4-carboxamide binding site. Positions 269 and 282 each coordinate Mg(2+).

The protein belongs to the phosphohexose mutase family. Mg(2+) is required as a cofactor. Mn(2+) serves as cofactor.

It catalyses the reaction 5-amino-1-(5-phospho-beta-D-ribosyl)imidazole-4-carboxamide + formate + ATP = 5-formamido-1-(5-phospho-D-ribosyl)imidazole-4-carboxamide + ADP + phosphate. The protein operates within purine metabolism; IMP biosynthesis via de novo pathway; 5-formamido-1-(5-phospho-D-ribosyl)imidazole-4-carboxamide from 5-amino-1-(5-phospho-D-ribosyl)imidazole-4-carboxamide (formate route): step 1/1. Its function is as follows. Catalyzes the ATP- and formate-dependent formylation of 5-aminoimidazole-4-carboxamide-1-beta-d-ribofuranosyl 5'-monophosphate (AICAR) to 5-formaminoimidazole-4-carboxamide-1-beta-d-ribofuranosyl 5'-monophosphate (FAICAR) in the absence of folates. The protein is 5-formaminoimidazole-4-carboxamide-1-(beta)-D-ribofuranosyl 5'-monophosphate synthetase of Sulfurisphaera tokodaii (strain DSM 16993 / JCM 10545 / NBRC 100140 / 7) (Sulfolobus tokodaii).